The following is a 567-amino-acid chain: Urease subunit alpha (567 aa).

Positions 134, 136, and 217 each coordinate Ni(2+). Lys-217 is modified (N6-carboxylysine). His-219 lines the substrate pocket. Ni(2+) contacts are provided by His-246 and His-272. His-320 acts as the Proton donor in catalysis. Asp-360 serves as a coordination point for Ni(2+).

The protein belongs to the metallo-dependent hydrolases superfamily. Urease alpha subunit family. Heterotrimer of UreA (gamma), UreB (beta) and UreC (alpha) subunits. Three heterotrimers associate to form the active enzyme. It depends on Ni cation as a cofactor. Carboxylation allows a single lysine to coordinate two nickel ions.

The protein localises to the cytoplasm. It carries out the reaction urea + 2 H2O + H(+) = hydrogencarbonate + 2 NH4(+). The protein operates within nitrogen metabolism; urea degradation; CO(2) and NH(3) from urea (urease route): step 1/1. In Polynucleobacter asymbioticus (strain DSM 18221 / CIP 109841 / QLW-P1DMWA-1) (Polynucleobacter necessarius subsp. asymbioticus), this protein is Urease subunit alpha.